The following is a 274-amino-acid chain: Nickel/cobalt efflux system RcnA (274 aa).

Residues 1–12 (MTEFTTLLQQGN) are Periplasmic-facing. The chain crosses the membrane as a helical span at residues 13 to 33 (AWFFIPSAILLGALHGLEPGH). Topologically, residues 34 to 56 (SKTMMAAFIIAIKGTIKQAVMLG) are cytoplasmic. The chain crosses the membrane as a helical span at residues 57–77 (LAATISHTAVVWLIAFGGMVI). Topologically, residues 78 to 86 (SKRFTAQSA) are periplasmic. The helical transmembrane segment at 87–107 (EPWLQLISAVIIISTAFWMFW) threads the bilayer. Over 108-175 (RTWRGERNWL…DGREVTNWQI (68 aa)) the chain is Cytoplasmic. Positions 127 to 153 (HHHHDHEHHHDHGHHHHHEHGEYQDAH) are disordered. The segment covering 129-144 (HHDHEHHHDHGHHHHH) has biased composition (basic residues). Residues 176-196 (LLFGLTGGLIPCPAAITVLLI) traverse the membrane as a helical segment. Topologically, residues 197–209 (CIQLKALTLGATL) are periplasmic. The chain crosses the membrane as a helical span at residues 210–230 (VVSFSIGLALTLVTVGVGAAI). The Cytoplasmic segment spans residues 231–251 (SVQQVAKRWSGFNTLAKRAPY). Residues 252 to 272 (FSSLLIGLVGVYMGVHGFMGI) traverse the membrane as a helical segment. Topologically, residues 273–274 (MR) are periplasmic.

Belongs to the NiCoT transporter (TC 2.A.52) family. RcnA subfamily.

It localises to the cell inner membrane. Efflux system for nickel and cobalt. The sequence is that of Nickel/cobalt efflux system RcnA (rcnA) from Escherichia coli (strain K12).